Reading from the N-terminus, the 178-residue chain is MDQRRVEDIAQIGAYSLPYDIVNIVYGAIVIYRASQEGKDPLAYASNKQGFKEAVKKLIKLGVIEKTTPYSLKKEYEEQVEKFDEIINYEDYERARYELYKLSEKADNLFTSSLVLYASVFLSLSELKPEILKIINEYIDQQTKVDYGKWIVIGIATASVLFAIASVLIHILAHVSIW.

This protein is non-essential for virus function. This is an uncharacterized protein from Sulfolobus spindle-shape virus 1 (SSV1).